A 339-amino-acid chain; its full sequence is tRNA dimethylallyltransferase (339 aa).

36–43 lines the ATP pocket; sequence GPTGSGKT. 38–43 contributes to the substrate binding site; that stretch reads TGSGKT. The segment at 61–64 is interaction with substrate tRNA; it reads DSMQ.

This sequence belongs to the IPP transferase family. In terms of assembly, monomer. Mg(2+) serves as cofactor.

It catalyses the reaction adenosine(37) in tRNA + dimethylallyl diphosphate = N(6)-dimethylallyladenosine(37) in tRNA + diphosphate. In terms of biological role, catalyzes the transfer of a dimethylallyl group onto the adenine at position 37 in tRNAs that read codons beginning with uridine, leading to the formation of N6-(dimethylallyl)adenosine (i(6)A). This chain is tRNA dimethylallyltransferase, found in Chlamydia trachomatis serovar L2 (strain ATCC VR-902B / DSM 19102 / 434/Bu).